Reading from the N-terminus, the 68-residue chain is MQVSVRDNNVDQALRALKKKLQREGVFREMKLKQHFEKPSEKKAREKAEAIRRARKLARKKAQREGLL.

The protein belongs to the bacterial ribosomal protein bS21 family.

The chain is Small ribosomal subunit protein bS21 from Ruegeria sp. (strain TM1040) (Silicibacter sp.).